Reading from the N-terminus, the 307-residue chain is Glycine--tRNA ligase alpha subunit (307 aa).

It belongs to the class-II aminoacyl-tRNA synthetase family. In terms of assembly, tetramer of two alpha and two beta subunits.

It is found in the cytoplasm. It carries out the reaction tRNA(Gly) + glycine + ATP = glycyl-tRNA(Gly) + AMP + diphosphate. The protein is Glycine--tRNA ligase alpha subunit of Xylella fastidiosa (strain M23).